The following is a 333-amino-acid chain: Flagellar P-ring protein (333 aa).

An N-terminal signal peptide occupies residues 1-22; the sequence is MRRNILSMFLFITLIIYSSIFA.

The protein belongs to the FlgI family. As to quaternary structure, the basal body constitutes a major portion of the flagellar organelle and consists of four rings (L,P,S, and M) mounted on a central rod.

Its subcellular location is the periplasm. The protein localises to the bacterial flagellum basal body. Its function is as follows. Assembles around the rod to form the L-ring and probably protects the motor/basal body from shearing forces during rotation. This Fervidobacterium nodosum (strain ATCC 35602 / DSM 5306 / Rt17-B1) protein is Flagellar P-ring protein.